A 157-amino-acid polypeptide reads, in one-letter code: UPF0756 membrane protein ABC2716 (157 aa).

4 consecutive transmembrane segments (helical) span residues 8–28 (FLLL…IIAI), 54–74 (LGVT…DIGF), 84–104 (LYAW…ASGI), and 117–137 (LVLG…GPLI).

It belongs to the UPF0756 family.

Its subcellular location is the cell membrane. In Shouchella clausii (strain KSM-K16) (Alkalihalobacillus clausii), this protein is UPF0756 membrane protein ABC2716.